A 570-amino-acid chain; its full sequence is NADPH oxidase 2 (570 aa).

At 2–9 (GNWVVNEG) the chain is on the cytoplasmic side. Residues 10-36 (ISIFVILVWLGMNVFLFVWYYRVYDIP) form a helical membrane-spanning segment. The Extracellular portion of the chain corresponds to 37 to 46 (DKFFYTRKLL). The chain crosses the membrane as a helical span at residues 47 to 72 (GSALALARAPAACLNFNCMLILLPVC). The region spanning 54 to 286 (RAPAACLNFN…MFLYLCERLV (233 aa)) is the Ferric oxidoreductase domain. The Cytoplasmic segment spans residues 73-95 (RNLLSFLRGSSACCSTRIRRQLD). Residues 96 to 130 (RNLTFHKMVAWMIALHTAIHTIAHLFNVEWCVNAR) form a helical membrane-spanning segment. The heme b site is built by His-101 and His-115. The Extracellular segment spans residues 131 to 163 (VNNSDPYSIALSDIGDKPNETYLNFVRQRIKNP). Residues Asn-132 and Asn-149 are each glycosylated (N-linked (GlcNAc...) asparagine). Lys-161 participates in a covalent cross-link: Glycyl lysine isopeptide (Lys-Gly) (interchain with G-Cter in ubiquitin). Residues 164-194 (EGGLYVAVTRLAGITGVVITLCLILIITSST) traverse the membrane as a helical segment. Residues 195–203 (KTIRRSYFE) lie on the Cytoplasmic side of the membrane. FAD is bound by residues Arg-199 and Ser-200. The helical transmembrane segment at 204–222 (VFWYTHHLFVIFFIGLAIH) threads the bilayer. 5 residues coordinate heme b: Trp-206, His-209, His-222, Arg-226, and Ile-227. At 223 to 267 (GAQRIVRGQTAESLLKHQPRNCYQNISQWGKIENCPIPEFSGNPP) the chain is on the extracellular side. N-linked (GlcNAc...) asparagine glycosylation occurs at Asn-247. Positions 268, 280, and 287 each coordinate heme b. A helical membrane pass occupies residues 268 to 285 (MTWKWIVGPMFLYLCERL). The Cytoplasmic portion of the chain corresponds to 286–570 (VRFWRSQQKV…VHFIFNKENF (285 aa)). One can recognise an FAD-binding FR-type domain in the interval 287-397 (RFWRSQQKVV…DGPFGTASED (111 aa)). Residues Lys-294, Lys-299, Lys-306, Lys-328, and Lys-334 each participate in a glycyl lysine isopeptide (Lys-Gly) (interchain with G-Cter in ubiquitin) cross-link. Trp-337, His-338, Pro-339, Thr-341, His-354, Arg-356, Trp-361, and Thr-362 together coordinate FAD. A Glycyl lysine isopeptide (Lys-Gly) (interchain with G-Cter in ubiquitin) cross-link involves residue Lys-381. Positions 411, 446, and 481 each coordinate NADPH. A Glycyl lysine isopeptide (Lys-Gly) (interchain with G-Cter in ubiquitin) cross-link involves residue Lys-506. Residue Arg-513 participates in NADPH binding. A Glycyl lysine isopeptide (Lys-Gly) (interchain with G-Cter in ubiquitin) cross-link involves residue Lys-567.

As to quaternary structure, component of the phagocyte NADPH oxidase core complex/cytochrome b558 complex, composed of CYBB (heavy chain (beta)) and CYBA (light chain (alpha)). Component of the phagocyte NADPH oxidase complex composed of an obligatory core heterodimer formed by the membrane proteins CYBA and CYBB and the cytosolic regulatory subunits NCF1/p47-phox, NCF2/p67-phox, NCF4/p40-phox and the small GTPase RAC1 or RAC2. Interacts with NCF1 (phosphorylated form). Interacts with NCF2; the interaction is enhanced in the presence of GBP7. Interacts with RAC2. Interacts with RAC1. Interacts with calprotectin (S100A8/9). Interacts with NRROS; the interaction is direct and impairs formation of a stable NADPH oxidase complex. Interacts with CYBC1; CYBC1 may act as a chaperone stabilizing Cytochrome b-245 heterodimer. The CYBA-CYBB complex interacts with GBP7. FAD is required as a cofactor. Post-translationally, glycosylated. Phosphorylated on Ser and Thr residues by PKC during neutrophils activation. Phosphorylation enhances the NADPH oxidase activity and stimulates its interaction with RAC2, NCF2/p67-phox, and NCF1/p47-phox. In terms of processing, undergoes 'Lys-48'-linked polyubiquitination, likely by RNF145, triggering endoplasmic reticulum-associated degradation.

Its subcellular location is the cell membrane. The enzyme catalyses NADPH + 2 O2 = 2 superoxide + NADP(+) + H(+). Functionally, catalytic subunit of the phagocyte NADPH oxidase complex that mediates the transfer of electrons from cytosolic NADPH to O2 to produce the superoxide anion (O2(-)). In the activated complex, electrons are first transferred from NADPH to flavin adenine dinucleotide (FAD) and subsequently transferred via two heme molecules to molecular oxygen, producing superoxide through an outer-sphere reaction. Activation of the NADPH oxidase complex is initiated by the assembly of cytosolic subunits of the NADPH oxidase complex with the core NADPH oxidase complex to form a complex at the plasma membrane or phagosomal membrane. This activation process is initiated by phosphorylation dependent binding of the cytosolic NCF1/p47-phox subunit to the C-terminus of CYBA/p22-phox. NADPH oxidase complex assembly is impaired through interaction with NRROS. The chain is NADPH oxidase 2 from Bos taurus (Bovine).